The following is a 1171-amino-acid chain: Phytochrome B (1171 aa).

The segment covering 1 to 19 has biased composition (low complexity); it reads MASGSRATPTRSPSSARPA. Residues 1-53 are disordered; it reads MASGSRATPTRSPSSARPAAPRHQHHHSQSSGGSTSRAGGGGGGGGGGGGGAA. Gly residues predominate over residues 38–52; that stretch reads AGGGGGGGGGGGGGA. Positions 259–442 constitute a GAF domain; the sequence is DVKLLCDTVV…AFGLQLNMEL (184 aa). Residue Cys-364 coordinates phytochromobilin. PAS domains lie at 661 to 732 and 795 to 866; these read VARE…LRGD and DYKA…MIVL. Residues 943 to 1161 enclose the Histidine kinase domain; that stretch reads YIYQEIKNPL…FFHIVLELPQ (219 aa).

It belongs to the phytochrome family. In terms of assembly, homodimer. In terms of processing, contains one covalently linked phytochromobilin chromophore.

Regulatory photoreceptor which exists in two forms that are reversibly interconvertible by light: the Pr form that absorbs maximally in the red region of the spectrum and the Pfr form that absorbs maximally in the far-red region. Photoconversion of Pr to Pfr induces an array of morphogenic responses, whereas reconversion of Pfr to Pr cancels the induction of those responses. Pfr controls the expression of a number of nuclear genes including those encoding the small subunit of ribulose-bisphosphate carboxylase, chlorophyll A/B binding protein, protochlorophyllide reductase, rRNA, etc. It also controls the expression of its own gene(s) in a negative feedback fashion. The protein is Phytochrome B (PHYB) of Oryza sativa subsp. indica (Rice).